Consider the following 395-residue polypeptide: Choline/ethanolamine kinase (395 aa).

Ala2 is modified (N-acetylalanine). Residues 75–81 (SGGLSNL), Arg104, 146–152 (QYIPSRP), Gln244, and Asp264 contribute to the ATP site. 77–79 (GLS) serves as a coordination point for phosphocholine.

It belongs to the choline/ethanolamine kinase family. As to quaternary structure, homodimer, and heterodimer with CHKA.

The catalysed reaction is choline + ATP = phosphocholine + ADP + H(+). The enzyme catalyses ethanolamine + ATP = phosphoethanolamine + ADP + H(+). Its pathway is phospholipid metabolism; phosphatidylethanolamine biosynthesis; phosphatidylethanolamine from ethanolamine: step 1/3. In terms of biological role, has a key role in phospholipid metabolism, and catalyzes the first step of phosphatidylethanolamine and phosphatidylcholine biosynthesis. In Homo sapiens (Human), this protein is Choline/ethanolamine kinase (CHKB).